The following is a 484-amino-acid chain: Glutamyl-tRNA(Gln) amidotransferase subunit A (484 aa).

Active-site charge relay system residues include K76 and S151. The active-site Acyl-ester intermediate is the S175.

Belongs to the amidase family. GatA subfamily. Heterotrimer of A, B and C subunits.

The catalysed reaction is L-glutamyl-tRNA(Gln) + L-glutamine + ATP + H2O = L-glutaminyl-tRNA(Gln) + L-glutamate + ADP + phosphate + H(+). Functionally, allows the formation of correctly charged Gln-tRNA(Gln) through the transamidation of misacylated Glu-tRNA(Gln) in organisms which lack glutaminyl-tRNA synthetase. The reaction takes place in the presence of glutamine and ATP through an activated gamma-phospho-Glu-tRNA(Gln). This is Glutamyl-tRNA(Gln) amidotransferase subunit A from Alkalilimnicola ehrlichii (strain ATCC BAA-1101 / DSM 17681 / MLHE-1).